Reading from the N-terminus, the 181-residue chain is Oligoribonuclease (181 aa).

Residues 8 to 171 form the Exonuclease domain; that stretch reads LIWIDLEMTG…LDIQESIAEL (164 aa). Tyrosine 129 is a catalytic residue.

The protein belongs to the oligoribonuclease family.

It is found in the cytoplasm. 3'-to-5' exoribonuclease specific for small oligoribonucleotides. This Shewanella amazonensis (strain ATCC BAA-1098 / SB2B) protein is Oligoribonuclease.